Consider the following 188-residue polypeptide: Mediator of RNA polymerase II transcription subunit 29 (188 aa).

2 stretches are compositionally biased toward low complexity: residues 1–23 (MNPN…QSSP) and 30–43 (VQHQ…PLQQ). Residues 1-43 (MNPNMNMMPMSGPQMMQVMQSSPSGPPGPVQHQQQQPPQPLQQ) form a disordered region.

Belongs to the Mediator complex subunit 29 family. Component of the Mediator complex. Self-associates. Interacts with dsx.

The protein localises to the nucleus. Functionally, component of the Mediator complex, a coactivator involved in the regulated transcription of nearly all RNA polymerase II-dependent genes. Mediator functions as a bridge to convey information from gene-specific regulatory proteins to the basal RNA polymerase II transcription machinery. Mediator is recruited to promoters by direct interactions with regulatory proteins and serves as a scaffold for the assembly of a functional preinitiation complex with RNA polymerase II and the general transcription factors. Required for female somatic sexual development. The chain is Mediator of RNA polymerase II transcription subunit 29 (ix) from Drosophila melanogaster (Fruit fly).